The primary structure comprises 410 residues: TNF receptor-associated factor family protein DDB_G0279745 (410 aa).

The RING-type; degenerate zinc-finger motif lies at 27–67 (CVICSFPLFDGLQCKRGHGACKSCWEKIIGENGKKECHSCR). 2 TRAF-type zinc fingers span residues 81-154 (YLEK…SLEQ) and 154-213 (QHQN…DESI). A coiled-coil region spans residues 216–284 (LSNSIVEIQK…SMINKLDDSA (69 aa)).

Belongs to the TNF receptor-associated factor family.

The protein localises to the cytoplasm. Probable adapter protein and signal transducer that links members of the tumor necrosis factor receptor family to different signaling pathways by association with the receptor cytoplasmic domain and kinases. This is TNF receptor-associated factor family protein DDB_G0279745 from Dictyostelium discoideum (Social amoeba).